The primary structure comprises 372 residues: Cobalt-precorrin-5B C(1)-methyltransferase (372 aa).

This sequence belongs to the CbiD family.

The enzyme catalyses Co-precorrin-5B + S-adenosyl-L-methionine = Co-precorrin-6A + S-adenosyl-L-homocysteine. It functions in the pathway cofactor biosynthesis; adenosylcobalamin biosynthesis; cob(II)yrinate a,c-diamide from sirohydrochlorin (anaerobic route): step 6/10. Catalyzes the methylation of C-1 in cobalt-precorrin-5B to form cobalt-precorrin-6A. In Prochlorococcus marinus (strain MIT 9515), this protein is Cobalt-precorrin-5B C(1)-methyltransferase.